Consider the following 391-residue polypeptide: Odorant receptor 67d (391 aa).

Over 1 to 45 (MLKMAKVEPVERYCKVIRMIRFCVGFCGNDVADPNFRMWWLTYAV) the chain is Cytoplasmic. A helical membrane pass occupies residues 46-66 (MAAIAFFFACTGYTIYVGVVI). The Extracellular segment spans residues 67–71 (NGDLT). The helical transmembrane segment at 72 to 92 (IILQALAMVGSAVQGLTKLLV) threads the bilayer. At 93–140 (TANNASHMREVQNTYEDIYREYGSKGDEYAKCLEKRIRITWTLLIGFM) the chain is on the cytoplasmic side. The helical transmembrane segment at 141–161 (LVYIILLGLVITFPIFYLLIL) threads the bilayer. The Extracellular portion of the chain corresponds to 162–164 (HQK). The chain crosses the membrane as a helical span at residues 165–185 (VLVMQFLIPFLDHTTDGGHLI). The Cytoplasmic segment spans residues 186 to 191 (LTAAHV). A helical membrane pass occupies residues 192-212 (ILITFGGFGNYGGDMYLFLFV). At 213-268 (THVPLIKDIFCVKLTEFNELVMKRNDFPKVRAMLCDLLVWHQLYTRMLQTTKKIYS) the chain is on the extracellular side. Residues 269 to 289 (IVLFVQLSTTCVGLLCTISCI) form a helical membrane-spanning segment. Over 290–297 (FMKAWPAA) the chain is Cytoplasmic. Residues 298 to 318 (PLYLLYAAITLYTFCGLGTLV) traverse the membrane as a helical segment. Residues 319 to 391 (ENSNEDFLSV…FSMMLMNYLG (73 aa)) are Extracellular-facing.

The protein belongs to the insect chemoreceptor superfamily. Heteromeric odorant receptor channel (TC 1.A.69) family. Or67d subfamily. In terms of assembly, interacts with Orco. Complexes exist early in the endomembrane system in olfactory sensory neurons (OSNs), coupling these complexes to the conserved ciliary trafficking pathway. In terms of tissue distribution, expressed in antenna.

It localises to the cell membrane. In terms of biological role, plays a role in detection and sensitivity to pheromones and signal transduction of the fatty-acid-derived male pheromone 11-cis vaccenyl acetate (cVA). Acts in concert with Snmp and lush to capture cVA molecules on the surface of Or67d expressing olfactory dendrites and facilitate their transfer to the odorant-receptor Orco complex. Necessary to mediate behavioral responses to cVA by regulating both male and female mating behavior. Activation of Or67d neurons by cVA inhibits courtship of other males, whereas in females their activation promotes receptivity to other males. May form a complex with Orco to form odorant-sensing units, providing sensitive and prolonged odorant signaling and calcium permeability. The sequence is that of Odorant receptor 67d (Or67d) from Drosophila melanogaster (Fruit fly).